The following is a 54-amino-acid chain: ATP synthase F(0) complex subunit 8 (54 aa).

The helical transmembrane segment at 8–24 (PWFSIMLLTWFTFSLLI) threads the bilayer.

It belongs to the ATPase protein 8 family. In terms of assembly, component of the ATP synthase complex composed at least of ATP5F1A/subunit alpha, ATP5F1B/subunit beta, ATP5MC1/subunit c (homooctomer), MT-ATP6/subunit a, MT-ATP8/subunit 8, ATP5ME/subunit e, ATP5MF/subunit f, ATP5MG/subunit g, ATP5MK/subunit k, ATP5MJ/subunit j, ATP5F1C/subunit gamma, ATP5F1D/subunit delta, ATP5F1E/subunit epsilon, ATP5PF/subunit F6, ATP5PB/subunit b, ATP5PD/subunit d, ATP5PO/subunit OSCP. ATP synthase complex consists of a soluble F(1) head domain (subunits alpha(3) and beta(3)) - the catalytic core - and a membrane F(0) domain - the membrane proton channel (subunits c, a, 8, e, f, g, k and j). These two domains are linked by a central stalk (subunits gamma, delta, and epsilon) rotating inside the F1 region and a stationary peripheral stalk (subunits F6, b, d, and OSCP).

It localises to the mitochondrion membrane. Functionally, subunit 8, of the mitochondrial membrane ATP synthase complex (F(1)F(0) ATP synthase or Complex V) that produces ATP from ADP in the presence of a proton gradient across the membrane which is generated by electron transport complexes of the respiratory chain. ATP synthase complex consist of a soluble F(1) head domain - the catalytic core - and a membrane F(1) domain - the membrane proton channel. These two domains are linked by a central stalk rotating inside the F(1) region and a stationary peripheral stalk. During catalysis, ATP synthesis in the catalytic domain of F(1) is coupled via a rotary mechanism of the central stalk subunits to proton translocation. In vivo, can only synthesize ATP although its ATP hydrolase activity can be activated artificially in vitro. Part of the complex F(0) domain. This chain is ATP synthase F(0) complex subunit 8, found in Gallus gallus (Chicken).